Here is a 126-residue protein sequence, read N- to C-terminus: Holo-[acyl-carrier-protein] synthase (126 aa).

Positions 9 and 58 each coordinate Mg(2+).

It belongs to the P-Pant transferase superfamily. AcpS family. It depends on Mg(2+) as a cofactor.

The protein resides in the cytoplasm. The enzyme catalyses apo-[ACP] + CoA = holo-[ACP] + adenosine 3',5'-bisphosphate + H(+). Transfers the 4'-phosphopantetheine moiety from coenzyme A to a Ser of acyl-carrier-protein. The chain is Holo-[acyl-carrier-protein] synthase from Vibrio vulnificus (strain YJ016).